The primary structure comprises 512 residues: ATP synthase subunit alpha 2 (512 aa).

Residue 169 to 176 (GDRQTGKT) participates in ATP binding.

This sequence belongs to the ATPase alpha/beta chains family. F-type ATPases have 2 components, CF(1) - the catalytic core - and CF(0) - the membrane proton channel. CF(1) has five subunits: alpha(3), beta(3), gamma(1), delta(1), epsilon(1). CF(0) has three main subunits: a(1), b(2) and c(9-12). The alpha and beta chains form an alternating ring which encloses part of the gamma chain. CF(1) is attached to CF(0) by a central stalk formed by the gamma and epsilon chains, while a peripheral stalk is formed by the delta and b chains.

The protein localises to the cell inner membrane. It carries out the reaction ATP + H2O + 4 H(+)(in) = ADP + phosphate + 5 H(+)(out). Functionally, produces ATP from ADP in the presence of a proton gradient across the membrane. The alpha chain is a regulatory subunit. The polypeptide is ATP synthase subunit alpha 2 (Vibrio campbellii (strain ATCC BAA-1116)).